A 233-amino-acid chain; its full sequence is MEKIGVIVTAGGAGRRFGGEKPKQFLELSGIPVIIITLKRMVNLPIVGQVVLTVPENYIEVAGDLLSRYNLAGIKLTAGGTTRRESVLRGIRALTGNFSIIAVHDGVRPFFPKGALSEGVKKLSEGYGGAILAVPLRDTVKEVKDNVVISTLDRSRLYAVQTPQIFRREALLKGHALGEKQHLDAVDDSILVELCGETVAVIPGDYKNLKITWPEDLEFAEFLFTRYFAKELL.

Belongs to the IspD/TarI cytidylyltransferase family. IspD subfamily.

The enzyme catalyses 2-C-methyl-D-erythritol 4-phosphate + CTP + H(+) = 4-CDP-2-C-methyl-D-erythritol + diphosphate. Its pathway is isoprenoid biosynthesis; isopentenyl diphosphate biosynthesis via DXP pathway; isopentenyl diphosphate from 1-deoxy-D-xylulose 5-phosphate: step 2/6. Catalyzes the formation of 4-diphosphocytidyl-2-C-methyl-D-erythritol from CTP and 2-C-methyl-D-erythritol 4-phosphate (MEP). The polypeptide is 2-C-methyl-D-erythritol 4-phosphate cytidylyltransferase (Carboxydothermus hydrogenoformans (strain ATCC BAA-161 / DSM 6008 / Z-2901)).